The chain runs to 247 residues: Small ribosomal subunit protein uS3 (247 aa).

Residues 39-107 (VRDYLRKKLD…PAQVNIEEIT (69 aa)) form the KH type-2 domain. Residues 213-247 (SVYNPPKEDKTRAPKRRGRSNSNRRNSDRANTDRG) are disordered. A compositionally biased stretch (basic and acidic residues) spans 237 to 247 (RNSDRANTDRG).

This sequence belongs to the universal ribosomal protein uS3 family. Part of the 30S ribosomal subunit. Forms a tight complex with proteins S10 and S14.

Binds the lower part of the 30S subunit head. Binds mRNA in the 70S ribosome, positioning it for translation. This is Small ribosomal subunit protein uS3 from Psychrobacter sp. (strain PRwf-1).